The chain runs to 305 residues: NAD kinase 2 (305 aa).

The active-site Proton acceptor is the Asp78. NAD(+) is bound by residues 78 to 79, 152 to 153, Asp182, 193 to 198, and Asn251; these read DG, NE, and TAYSLS.

It belongs to the NAD kinase family. Requires a divalent metal cation as cofactor.

The protein localises to the cytoplasm. The catalysed reaction is NAD(+) + ATP = ADP + NADP(+) + H(+). In terms of biological role, involved in the regulation of the intracellular balance of NAD and NADP, and is a key enzyme in the biosynthesis of NADP. Catalyzes specifically the phosphorylation on 2'-hydroxyl of the adenosine moiety of NAD to yield NADP. This is NAD kinase 2 from Trichormus variabilis (strain ATCC 29413 / PCC 7937) (Anabaena variabilis).